The chain runs to 151 residues: MKEKEENLIAQNKKARHDYFIKETLEAGIALTGTEIKSVRARRINLRDGYVQIINGSAYLENVHISEYKQGNRYNHDPLRSRRLLLHKKEINRLAKVQAERGIAIIPLKVYLKHGFAKVLIGVGQGKKEYDKRQTIKERDQKREIRRKYGI.

It belongs to the SmpB family.

Its subcellular location is the cytoplasm. In terms of biological role, required for rescue of stalled ribosomes mediated by trans-translation. Binds to transfer-messenger RNA (tmRNA), required for stable association of tmRNA with ribosomes. tmRNA and SmpB together mimic tRNA shape, replacing the anticodon stem-loop with SmpB. tmRNA is encoded by the ssrA gene; the 2 termini fold to resemble tRNA(Ala) and it encodes a 'tag peptide', a short internal open reading frame. During trans-translation Ala-aminoacylated tmRNA acts like a tRNA, entering the A-site of stalled ribosomes, displacing the stalled mRNA. The ribosome then switches to translate the ORF on the tmRNA; the nascent peptide is terminated with the 'tag peptide' encoded by the tmRNA and targeted for degradation. The ribosome is freed to recommence translation, which seems to be the essential function of trans-translation. The polypeptide is SsrA-binding protein (Lactobacillus acidophilus (strain ATCC 700396 / NCK56 / N2 / NCFM)).